The sequence spans 76 residues: Small ribosomal subunit protein bS18 (76 aa).

This sequence belongs to the bacterial ribosomal protein bS18 family. As to quaternary structure, part of the 30S ribosomal subunit. Forms a tight heterodimer with protein bS6.

In terms of biological role, binds as a heterodimer with protein bS6 to the central domain of the 16S rRNA, where it helps stabilize the platform of the 30S subunit. This is Small ribosomal subunit protein bS18 from Aeromonas salmonicida (strain A449).